Reading from the N-terminus, the 605-residue chain is Putative zinc finger CCCH domain-containing protein 57 (605 aa).

Disordered stretches follow at residues 198-218, 238-261, and 375-403; these read RHTGHESQNDADDAEQHGREV, LLQDDARRRRADAEAEQQGGDGEV, and QASHQDLPLQPPQGFPFQQQPQHDGYQQP. Basic and acidic residues-rich tracts occupy residues 201–218 and 238–250; these read GHESQNDADDAEQHGREV and LLQDDARRRRADA. The segment covering 389–403 has biased composition (low complexity); that stretch reads FPFQQQPQHDGYQQP. C3H1-type zinc fingers lie at residues 519 to 547 and 557 to 585; these read EPKTVMCPDWCRTGHCSSGDGCEYAHSQD and KYRTEPCRYWLAGKGCWYGDKCRYKQHRL.

This is Putative zinc finger CCCH domain-containing protein 57 from Oryza sativa subsp. japonica (Rice).